The following is a 249-amino-acid chain: MNKKNQWIVGINAVVSSIENDAEHVREVLVEAASKNSRLLDIEENARRKGIEVRRVTTQALDGVGGGVRHQGVAARYAAVRLWEEHDLKDLVDAAGGQALLLVLDGVQDPHNLGACLRSAAAAGVTAVIIPKDKSVGINATVRKTSSGAADRLPVIAVVNLARSLRELQKQDVWIYGLAGEVETSLYALDLRGNVALVLGGEADGLRRLTREHCDVLARIPMPGEVESLNVSVAAGVTLFEAVRQRTLV.

S-adenosyl-L-methionine contacts are provided by Gly200, Ile220, and Leu229.

The protein belongs to the class IV-like SAM-binding methyltransferase superfamily. RNA methyltransferase TrmH family. RlmB subfamily.

The protein resides in the cytoplasm. It carries out the reaction guanosine(2251) in 23S rRNA + S-adenosyl-L-methionine = 2'-O-methylguanosine(2251) in 23S rRNA + S-adenosyl-L-homocysteine + H(+). Its function is as follows. Specifically methylates the ribose of guanosine 2251 in 23S rRNA. The polypeptide is 23S rRNA (guanosine-2'-O-)-methyltransferase RlmB (Xylella fastidiosa (strain Temecula1 / ATCC 700964)).